A 65-amino-acid polypeptide reads, in one-letter code: Small ribosomal subunit protein eS27 (65 aa).

C20, C23, C39, and C42 together coordinate Zn(2+). Residues 20 to 42 form a C4-type zinc finger; sequence CIDCGNEQIVFSHPATRVRCLVC.

It belongs to the eukaryotic ribosomal protein eS27 family. In terms of assembly, part of the 30S ribosomal subunit. Zn(2+) serves as cofactor.

The polypeptide is Small ribosomal subunit protein eS27 (Pyrococcus horikoshii (strain ATCC 700860 / DSM 12428 / JCM 9974 / NBRC 100139 / OT-3)).